The sequence spans 364 residues: O-methyltransferase ZRP4 (364 aa).

5 residues coordinate S-adenosyl-L-methionine: G208, D231, D251, M252, and K265. H269 (proton acceptor) is an active-site residue.

The protein belongs to the class I-like SAM-binding methyltransferase superfamily. Cation-independent O-methyltransferase family. COMT subfamily. As to quaternary structure, homodimer. Accumulates preferentially in the roots and is located predominantly in the region of the endodermis, low levels are seen in the leaves, stems and other shoot organs.

Functionally, may be involved in the O-methylation of suberin phenylpropanoid precursors. This is O-methyltransferase ZRP4 (ZRP4) from Zea mays (Maize).